Reading from the N-terminus, the 187-residue chain is MNLTNHFLVAMPGMKDPYFQNSVIYVCEHNEEGAMGLMINAPVDITVGNMLKQVDVQPVHPRLFEASLDRPVYNGGPISEDRGFILHKPKDYYESSIQMTDDLAVTTSRDILSVLGTEAEPSDYLVALGYSGWSAGQLENELVENSWLTIEATPEIIFDTPITERWKKAVEKLGIDPSQLSADAGHA.

It belongs to the UPF0301 (AlgH) family.

The sequence is that of UPF0301 protein VP2612 from Vibrio parahaemolyticus serotype O3:K6 (strain RIMD 2210633).